The primary structure comprises 856 residues: MSGRDNRGAGGGGGGHQPLSNAMGKLKEKLTRVGDELGYHRVESNLSTSNTATSLDTILPEDPFLFPQVSPQRHPQTVRTQRLLEDEPPLSFRPLLEDDDINEPPTQQPHRSPLRASGSLELTPLPPPPTSLEIREHRDRQQRGAQGDELQRSKQSLKGSRVSFERRDTGNSNTNNNKAAESSDEDSFEEKRTGFQQQKATSVDHKGILKDLKHILANDNRRQFQAKKHVSLDVKGTRFLQDLLKESSSEEEFHKTRREFQGRKHQSLDPRVTFKLDKVLQGSSTDSDEEGEDAEHKRLIHRPKDITKPVIIDLKDLESESDEDFLTSRQHFQQQRSISTDSRKSRRLYEMDEMGNKRGENIRHAVPFVRQITEDGKPKLEVYRPTTNPIFIWTQVLAALSVSLGSLVVGFVSAYTSPALVSMTDRNITSFEVTQDAGSWVGGIMPLAGLAGGIAGGPLIEYLGRRNTILATAVPFIVSSLLIACAVNVAMVLCGRFLAGFCVGIASLSLPVYLGETVQPEVRGTLGLLPTAFGNIGILLCFVAGSFMNWSMLAFLGAALPVPFLILMFLIPETPRWFVSRGREERARKALSWLRGKEADVEPELKGLMRSQADADRQATQNTMLELLKRNNLKPLSISLGLMFFQQLSGINAVIFYTVQIFKDAGSTIDGNICTIIVGVVNFLATFIGIVLIDRAGRKILLYVSNIAMILTLFVLGGFFYCKAHGPDVSNLGWLPLTCFVIYILGFSLGFGPIPWLMMGEILPAKIRGSAASVATAFNWSCTFVVTKTFQDLTVAMGAHGAFWLFGAICFVGLFFVIIYVPETQGKTLEDIERKMMGRVRRMSSVANIKPLSFNM.

Disordered regions lie at residues methionine 1–lysine 27 and aspartate 62–serine 202. The Cytoplasmic segment spans residues methionine 1–proline 389. Residues valine 69–threonine 80 are compositionally biased toward polar residues. Basic and acidic residues predominate over residues glutamate 133–glutamine 142. The span at glycine 170–alanine 180 shows a compositional bias: polar residues. Serine 247, serine 248, serine 249, serine 319, and serine 321 each carry phosphoserine. The segment at leucine 326–serine 345 is disordered. Over residues arginine 329 to threonine 340 the composition is skewed to polar residues. Residues isoleucine 390–glycine 410 form a helical membrane-spanning segment. The Extracellular segment spans residues phenylalanine 411–serine 439. The N-linked (GlcNAc...) asparagine glycan is linked to asparagine 427. A helical membrane pass occupies residues tryptophan 440 to isoleucine 460. Over glutamate 461–threonine 472 the chain is Cytoplasmic. Residues alanine 473–leucine 493 traverse the membrane as a helical segment. At cysteine 494–arginine 496 the chain is on the extracellular side. The chain crosses the membrane as a helical span at residues phenylalanine 497–threonine 517. The Cytoplasmic portion of the chain corresponds to valine 518–glycine 527. A helical transmembrane segment spans residues leucine 528–methionine 548. Asparagine 549 carries N-linked (GlcNAc...) asparagine glycosylation. Over asparagine 549–serine 551 the chain is Extracellular. The chain crosses the membrane as a helical span at residues methionine 552 to proline 572. Residues glutamate 573–proline 635 are Cytoplasmic-facing. A helical membrane pass occupies residues leucine 636–phenylalanine 656. Topologically, residues tyrosine 657–asparagine 672 are extracellular. Residues isoleucine 673–isoleucine 693 form a helical membrane-spanning segment. The Cytoplasmic segment spans residues aspartate 694–lysine 699. Residues isoleucine 700 to phenylalanine 720 form a helical membrane-spanning segment. The Extracellular segment spans residues tyrosine 721–cysteine 739. A helical membrane pass occupies residues phenylalanine 740–glycine 760. Residues glutamate 761 to lysine 766 are Cytoplasmic-facing. A helical membrane pass occupies residues isoleucine 767–threonine 787. Residues lysine 788–histidine 800 lie on the Extracellular side of the membrane. The helical transmembrane segment at glycine 801–valine 821 threads the bilayer. The Cytoplasmic portion of the chain corresponds to proline 822–methionine 856. A phosphoserine mark is found at serine 844 and serine 845.

This sequence belongs to the major facilitator superfamily. Sugar transporter (TC 2.A.1.1) family. Trehalose transporter subfamily.

Its subcellular location is the cell membrane. Functionally, low-capacity facilitative transporter for trehalose. Does not transport maltose, sucrose or lactose. Mediates the bidirectional transfer of trehalose. Responsible for the transport of trehalose synthesized in the fat body and the incorporation of trehalose into other tissues that require a carbon source, thereby regulating trehalose levels in the hemolymph. The sequence is that of Facilitated trehalose transporter Tret1 from Drosophila erecta (Fruit fly).